The following is a 660-amino-acid chain: Bifunctional polymyxin resistance protein ArnA (660 aa).

A formyltransferase ArnAFT region spans residues 1-304; that stretch reads MKTVVFAYHD…TLGLVQGSRL (304 aa). (6R)-10-formyltetrahydrofolate is bound at residue 86-88; it reads HLI. His104 serves as the catalytic Proton donor; for formyltransferase activity. (6R)-10-formyltetrahydrofolate contacts are provided by residues Arg114 and 136 to 140; that span reads VKRAD. Residues 314 to 660 form a dehydrogenase ArnADH region; the sequence is RRTRVLILGV…RTVDLTDKPS (347 aa). Residues Asp347 and 368-369 contribute to the NAD(+) site; that span reads DI. UDP-alpha-D-glucuronate contacts are provided by residues Ala393, Tyr398, and 432 to 433; that span reads TS. Glu434 functions as the Proton acceptor; for decarboxylase activity in the catalytic mechanism. UDP-alpha-D-glucuronate-binding positions include Arg460, Asn492, 526–535, and Tyr613; that span reads KLIDGGKQKR. Catalysis depends on Arg619, which acts as the Proton donor; for decarboxylase activity.

It in the N-terminal section; belongs to the Fmt family. UDP-L-Ara4N formyltransferase subfamily. The protein in the C-terminal section; belongs to the NAD(P)-dependent epimerase/dehydratase family. UDP-glucuronic acid decarboxylase subfamily. Homohexamer, formed by a dimer of trimers.

It carries out the reaction UDP-alpha-D-glucuronate + NAD(+) = UDP-beta-L-threo-pentopyranos-4-ulose + CO2 + NADH. The catalysed reaction is UDP-4-amino-4-deoxy-beta-L-arabinose + (6R)-10-formyltetrahydrofolate = UDP-4-deoxy-4-formamido-beta-L-arabinose + (6S)-5,6,7,8-tetrahydrofolate + H(+). The protein operates within nucleotide-sugar biosynthesis; UDP-4-deoxy-4-formamido-beta-L-arabinose biosynthesis; UDP-4-deoxy-4-formamido-beta-L-arabinose from UDP-alpha-D-glucuronate: step 1/3. It functions in the pathway nucleotide-sugar biosynthesis; UDP-4-deoxy-4-formamido-beta-L-arabinose biosynthesis; UDP-4-deoxy-4-formamido-beta-L-arabinose from UDP-alpha-D-glucuronate: step 3/3. Its pathway is bacterial outer membrane biogenesis; lipopolysaccharide biosynthesis. Its function is as follows. Bifunctional enzyme that catalyzes the oxidative decarboxylation of UDP-glucuronic acid (UDP-GlcUA) to UDP-4-keto-arabinose (UDP-Ara4O) and the addition of a formyl group to UDP-4-amino-4-deoxy-L-arabinose (UDP-L-Ara4N) to form UDP-L-4-formamido-arabinose (UDP-L-Ara4FN). The modified arabinose is attached to lipid A and is required for resistance to polymyxin and cationic antimicrobial peptides. This is Bifunctional polymyxin resistance protein ArnA from Escherichia coli (strain SMS-3-5 / SECEC).